Here is a 253-residue protein sequence, read N- to C-terminus: UPF0246 protein Swit_4565 (253 aa).

It belongs to the UPF0246 family.

The protein is UPF0246 protein Swit_4565 of Rhizorhabdus wittichii (strain DSM 6014 / CCUG 31198 / JCM 15750 / NBRC 105917 / EY 4224 / RW1) (Sphingomonas wittichii).